A 264-amino-acid chain; its full sequence is Splicing factor U2af 38 kDa subunit (264 aa).

The segment at 12–40 (EKDKVNCSFYFKIGACRHGDRCSRIHNKP) adopts a C3H1-type 1 zinc-finger fold. Residue Ser19 is modified to Phosphoserine. The region spanning 44–149 (QTVLLQNLYV…RPVYSELSPV (106 aa)) is the RRM domain. The C3H1-type 2 zinc-finger motif lies at 151–178 (DFREACCRQYEMGECTRSGFCNFMHLKP). The span at 190-219 (RRRRARSRSRSPGRRRGSRSRSRSPGRRGG) shows a compositional bias: basic residues. The segment at 190 to 264 (RRRRARSRSR…GGGGGGGGRY (75 aa)) is disordered. Residues 233-251 (NERDNMRGNDRGNDRDRRK) are compositionally biased toward basic and acidic residues. Residues 253 to 264 (GGGGGGGGGGRY) show a composition bias toward gly residues.

The protein belongs to the splicing factor SR family. In terms of assembly, associates with a 65 kDa protein.

It localises to the nucleus. Functionally, necessary for the splicing of pre-mRNA. Binds to the polypyrimidine tract of introns early during spliceosome assembly. This Drosophila melanogaster (Fruit fly) protein is Splicing factor U2af 38 kDa subunit (U2af38).